The sequence spans 709 residues: Eukaryotic translation initiation factor 3 subunit B (709 aa).

The sufficient for interaction with HCR1 and TIF32 stretch occupies residues 1 to 98 (MSINEEEYLR…LFIQYKNVAD (98 aa)). Positions 1–221 (MSINEEEYLR…GIQAWGGADF (221 aa)) are sufficient for interaction with PIC8. Positions 37-124 (NYVIVDGAPI…HRLLVNRLSD (88 aa)) constitute an RRM domain.

This sequence belongs to the eIF-3 subunit B family. Component of the eukaryotic translation initiation factor 3 (eIF-3) complex.

The protein localises to the cytoplasm. Its function is as follows. RNA-binding component of the eukaryotic translation initiation factor 3 (eIF-3) complex, which is involved in protein synthesis of a specialized repertoire of mRNAs and, together with other initiation factors, stimulates binding of mRNA and methionyl-tRNAi to the 40S ribosome. The eIF-3 complex specifically targets and initiates translation of a subset of mRNAs involved in cell proliferation. This Lodderomyces elongisporus (strain ATCC 11503 / CBS 2605 / JCM 1781 / NBRC 1676 / NRRL YB-4239) (Yeast) protein is Eukaryotic translation initiation factor 3 subunit B.